Consider the following 133-residue polypeptide: Small ribosomal subunit protein eS8 (133 aa).

The tract at residues 1–22 is disordered; sequence MGFYQGPDNRKITGGLKGKHRD.

This sequence belongs to the eukaryotic ribosomal protein eS8 family. Part of the 30S ribosomal subunit.

The chain is Small ribosomal subunit protein eS8 from Saccharolobus islandicus (strain Y.N.15.51 / Yellowstone #2) (Sulfolobus islandicus).